The primary structure comprises 276 residues: 3-methyl-2-oxobutanoate hydroxymethyltransferase (276 aa).

Mg(2+) is bound by residues Asp44 and Asp83. Residues 44–45, Asp83, and Lys113 each bind 3-methyl-2-oxobutanoate; that span reads DS. Residue Glu115 coordinates Mg(2+). The active-site Proton acceptor is the Glu182.

It belongs to the PanB family. As to quaternary structure, homodecamer; pentamer of dimers. It depends on Mg(2+) as a cofactor.

It is found in the cytoplasm. It catalyses the reaction 3-methyl-2-oxobutanoate + (6R)-5,10-methylene-5,6,7,8-tetrahydrofolate + H2O = 2-dehydropantoate + (6S)-5,6,7,8-tetrahydrofolate. The protein operates within cofactor biosynthesis; (R)-pantothenate biosynthesis; (R)-pantoate from 3-methyl-2-oxobutanoate: step 1/2. In terms of biological role, catalyzes the reversible reaction in which hydroxymethyl group from 5,10-methylenetetrahydrofolate is transferred onto alpha-ketoisovalerate to form ketopantoate. In Clostridium acetobutylicum (strain ATCC 824 / DSM 792 / JCM 1419 / IAM 19013 / LMG 5710 / NBRC 13948 / NRRL B-527 / VKM B-1787 / 2291 / W), this protein is 3-methyl-2-oxobutanoate hydroxymethyltransferase.